We begin with the raw amino-acid sequence, 244 residues long: Ribonuclease PH (244 aa).

Residues arginine 90 and 128 to 130 contribute to the phosphate site; that span reads GTR.

Belongs to the RNase PH family. In terms of assembly, homohexameric ring arranged as a trimer of dimers.

It carries out the reaction tRNA(n+1) + phosphate = tRNA(n) + a ribonucleoside 5'-diphosphate. Phosphorolytic 3'-5' exoribonuclease that plays an important role in tRNA 3'-end maturation. Removes nucleotide residues following the 3'-CCA terminus of tRNAs; can also add nucleotides to the ends of RNA molecules by using nucleoside diphosphates as substrates, but this may not be physiologically important. Probably plays a role in initiation of 16S rRNA degradation (leading to ribosome degradation) during starvation. The protein is Ribonuclease PH of Prochlorococcus marinus (strain MIT 9313).